The primary structure comprises 59 residues: Small EDRK-rich factor 2 (59 aa).

Composition is skewed to basic and acidic residues over residues 1–30 and 50–59; these read MTRG…RDDG and KANEKKEEPK. Positions 1-59 are disordered; that stretch reads MTRGNQRELARQKNMKKQSDSVKGKRRDDGLSAAARKQRDSEIMQQKQKKANEKKEEPK.

This sequence belongs to the SERF family.

Positive regulator of amyloid protein aggregation and proteotoxicity. Induces conformational changes in amyloid proteins, such as HTT, driving them into compact formations preceding the formation of aggregates. The protein is Small EDRK-rich factor 2 (SERF2) of Plecturocebus moloch (Dusky titi monkey).